The sequence spans 1141 residues: cGMP-inhibited 3',5'-cyclic phosphodiesterase 3A (1141 aa).

The tract at residues M1–G41 is disordered. Residues S62–G82 form a helical membrane-spanning segment. The tract at residues E89–G111 is disordered. The next 5 helical transmembrane spans lie at L127 to L147, A157 to V177, L182 to V202, L207 to E227, and F229 to A249. Residues P262–T309 are disordered. Position 310 is a phosphoserine (S310). The segment covering R433–T445 has biased composition (low complexity). The interval R433–W479 is disordered. Over residues P454–E467 the composition is skewed to basic and acidic residues. Residues S492, S520, S524, and S533 each carry the phosphoserine modification. A disordered region spans residues H504–A643. The segment covering V522 to G532 has biased composition (pro residues). Polar residues predominate over residues T618–L637. Positions K669–L1141 are interaction with SLFN12. The region spanning P674 to E1093 is the PDEase domain. H752 acts as the Proton donor in catalysis. H752 contributes to the AMP binding site. Mn(2+)-binding residues include H756, H836, D837, and D950. Residues D837, D950, and Q1001 each contribute to the AMP site. D837 is a Mg(2+) binding site. 2 disordered regions span residues G1024–R1062 and G1098–L1141. Residues D1029–A1046 show a composition bias toward acidic residues. S1033 is subject to Phosphoserine. T1036 carries the phosphothreonine modification. Residues G1098–S1113 show a composition bias toward polar residues. Residue K1120 forms a Glycyl lysine isopeptide (Lys-Gly) (interchain with G-Cter in SUMO2) linkage.

This sequence belongs to the cyclic nucleotide phosphodiesterase family. PDE3 subfamily. Homodimer. Interacts with PDE3A; direct low affinity interaction which is stimulated by binding of 17beta-estradiol/E2 to PDE3A and that positively regulates the ribonuclease activity of SLFN12. It depends on Mn(2+) as a cofactor. Mg(2+) is required as a cofactor.

It is found in the membrane. The protein localises to the cytoplasm. Its subcellular location is the cytosol. It carries out the reaction a nucleoside 3',5'-cyclic phosphate + H2O = a nucleoside 5'-phosphate + H(+). The catalysed reaction is 3',5'-cyclic AMP + H2O = AMP + H(+). The enzyme catalyses 3',5'-cyclic GMP + H2O = GMP + H(+). It catalyses the reaction 3',5'-cyclic UMP + H2O = UMP + H(+). Its function is as follows. Cyclic nucleotide phosphodiesterase with specificity for the second messengers cAMP and cGMP, which are key regulators of many important physiological processes. Also has activity toward cUMP. Independently of its catalytic activity it is part of an E2/17beta-estradiol-induced pro-apoptotic signaling pathway. E2 stabilizes the PDE3A/SLFN12 complex in the cytosol, promoting the dephosphorylation of SLFN12 and activating its pro-apoptotic ribosomal RNA/rRNA ribonuclease activity. This apoptotic pathway might be relevant in tissues with high concentration of E2 and be for instance involved in placenta remodeling. This Rattus norvegicus (Rat) protein is cGMP-inhibited 3',5'-cyclic phosphodiesterase 3A.